We begin with the raw amino-acid sequence, 287 residues long: ATP synthase gamma chain (287 aa).

Belongs to the ATPase gamma chain family. In terms of assembly, F-type ATPases have 2 components, CF(1) - the catalytic core - and CF(0) - the membrane proton channel. CF(1) has five subunits: alpha(3), beta(3), gamma(1), delta(1), epsilon(1). CF(0) has three main subunits: a, b and c.

The protein localises to the cell inner membrane. Its function is as follows. Produces ATP from ADP in the presence of a proton gradient across the membrane. The gamma chain is believed to be important in regulating ATPase activity and the flow of protons through the CF(0) complex. The sequence is that of ATP synthase gamma chain from Xylella fastidiosa (strain 9a5c).